Here is a 163-residue protein sequence, read N- to C-terminus: MSKGLLLLLLLSMGGTWASKEPLRPRCRPINATLAVEKEGCPVCITVNTTICAGYCPTMTRVLQGVLPALPQVVCNYRDVRFESIRLPGCPRGVNPVVSYAVALSCQCALCRRSTTDCGGPKDHPLTCDDPRFQASSSSKAPPPSLPSPSRLPGPSDTPILPQ.

A signal peptide spans 1 to 18; the sequence is MSKGLLLLLLLSMGGTWA. 6 disulfide bridges follow: Cys-27/Cys-75, Cys-41/Cys-90, Cys-44/Cys-128, Cys-52/Cys-106, Cys-56/Cys-108, and Cys-111/Cys-118. N-linked (GlcNAc...) asparagine glycans are attached at residues Asn-31 and Asn-48. The segment at 129 to 163 is disordered; the sequence is DDPRFQASSSSKAPPPSLPSPSRLPGPSDTPILPQ. Over residues 141–152 the composition is skewed to pro residues; that stretch reads APPPSLPSPSRL.

It belongs to the glycoprotein hormones subunit beta family. In terms of tissue distribution, expressed in placenta, testis and pituitary.

The protein resides in the secreted. In Homo sapiens (Human), this protein is Choriogonadotropin subunit beta variant 2 (CGB2).